Here is a 265-residue protein sequence, read N- to C-terminus: Capsule polysaccharide export inner-membrane protein BexB (265 aa).

Transmembrane regions (helical) follow at residues 37–57 (IGFF…VMMW), 64–84 (KFST…AMMW), 118–138 (LLEV…LVMI), 151–171 (LIAW…ICAI), 178–198 (FGKI…AFFF), and 235–255 (ESIG…LVMV). Positions 37-258 (IGFFWLFVEP…LLGLVMVKNF (222 aa)) constitute an ABC transmembrane type-2 domain.

Belongs to the ABC-2 integral membrane protein family.

The protein localises to the cell inner membrane. Functionally, may form an ATP-driven capsule polysaccharide export apparatus, in association with the BexA, BexC and BexD proteins. The protein is Capsule polysaccharide export inner-membrane protein BexB (bexB) of Haemophilus influenzae.